A 346-amino-acid chain; its full sequence is DLGAVIYLLLWGRQLFALYSSNDVTDISDDRFPKPPEIANGYVEHLFRYQRKNYYRLRTEGDGVYTLNDKKQWINKAVGDKLPECEAVCGKPKNPANPVQRILGGHLDAKGSFPWQAKMVSRHNLTTGATLINEQWLLTTAKNLFLSHSENATAKDSAPTLTLYVGKKQLVEIEKVVLHPNYHQVDIGLIKLKQKVLVNERVMPICLPSKNYAEVGRVGYVSGWGQSNNFKLTDHLKYVMLPVADQDQCIRHYEGSTVPEKKTPKSPVGVQPILNEHTFCAGMSKYQEDTCYGDAGSAFAVHDLEEDTWYAAGILSFDKSCAVAEYGVYVKVTSIHVWVQKTIAEN.

The segment at residues 1–16 (DLGAVIYLLLWGRQLF) is a signal peptide (not cleaved). Residues 32–85 (FPKPPEIANGYVEHLFRYQRKNYYRLRTEGDGVYTLNDKKQWINKAVGDKLPEC) form the Sushi domain. One can recognise a Peptidase S1 domain in the interval 102 to 344 (ILGGHLDAKG…IHVWVQKTIA (243 aa)). Disulfide bonds link Cys-249-Cys-280 and Cys-291-Cys-321.

This sequence belongs to the peptidase S1 family.

The protein localises to the secreted. Its function is as follows. Primate-specific plasma protein associated with apolipoprotein L-I (apoL-I)-containing high-density lipoprotein (HDL). Binds hemoglobin with high affinity and may contribute to the clearance of cell-free hemoglobin to allow hepatic recycling of heme iron. This is Haptoglobin-related protein (HPR) from Pan troglodytes (Chimpanzee).